Reading from the N-terminus, the 49-residue chain is Large ribosomal subunit protein bL33B (49 aa).

Belongs to the bacterial ribosomal protein bL33 family.

This is Large ribosomal subunit protein bL33B from Lactobacillus gasseri (strain ATCC 33323 / DSM 20243 / BCRC 14619 / CIP 102991 / JCM 1131 / KCTC 3163 / NCIMB 11718 / NCTC 13722 / AM63).